The chain runs to 131 residues: Large ribosomal subunit protein bL12 (131 aa).

This sequence belongs to the bacterial ribosomal protein bL12 family. As to quaternary structure, homodimer. Part of the ribosomal stalk of the 50S ribosomal subunit. Forms a multimeric L10(L12)X complex, where L10 forms an elongated spine to which 2 to 4 L12 dimers bind in a sequential fashion. Binds GTP-bound translation factors.

Functionally, forms part of the ribosomal stalk which helps the ribosome interact with GTP-bound translation factors. Is thus essential for accurate translation. The protein is Large ribosomal subunit protein bL12 of Nocardioides sp. (strain ATCC BAA-499 / JS614).